The primary structure comprises 69 residues: U2-agatoxin-Ao1o (69 aa).

An N-terminal signal peptide occupies residues 1 to 20 (MKAIISLLLISAMVFSMFEA). Residues 21–34 (VPVRRRFTAFEGER) constitute a propeptide that is removed on maturation. 3 disulfides stabilise this stretch: Cys-36-Cys-52, Cys-43-Cys-57, and Cys-51-Cys-67. Residue Leu-68 is modified to Leucine amide.

It belongs to the neurotoxin 01 (U2-agtx) family. Expressed by the venom gland.

The protein resides in the secreted. Insect active toxin causing rapid but reversible paralysis in crickets. No activity shown in mammals. Does not show effect on mammalian voltage-gated calcium channels. This is U2-agatoxin-Ao1o from Agelena orientalis (Funnel-web spider).